The primary structure comprises 589 residues: TAF5-like RNA polymerase II p300/CBP-associated factor-associated factor 65 kDa subunit 5L (589 aa).

6 WD repeats span residues 266 to 305 (NTEQLLNTAEISSDSKLLAAGFDNSCIKLWSLRSKKLKSE), 340 to 379 (GHCGPVYSTRFLADSSGLLSCSEDMSIRYWDLGSFTNTVL), 382 to 421 (GHAYPVWDVDISPFSLYFASGSHDRTARLWSFDRTYPLRI), 424 to 463 (GHLADVDCVKFHPNSNYLATGSTDKTVRLWSAQQGNSVRL), 466 to 505 (GHRGPVLSLSFSPNGKYLASAGEDQRLKLWDLASGTLFKE), and 508 to 547 (GHTDSITSLAFSPDSGLIASASMDNSVRVWDIRSTCCNTP).

It belongs to the WD repeat TAF5 family. In terms of assembly, the PCAF complex is composed of a number of TBP-associated factors (TAFS), such as TAF5, TAF5L, TAF6, TAF6L, TAF9, TAF10 and TAF12, PCAF, and also PCAF-associated factors (PAFs), such as TADA2L/ADA2, TADA3L/ADA3 and SPT3. Component of the STAGA transcription coactivator-HAT complex, at least composed of SUPT3H, GCN5L2, TAF5L, TAF6L, SUPT7L, TADA3L, TAD1L, TAF10, TAF12, TRRAP and TAF9.

The protein localises to the nucleus. Functions as a component of the PCAF complex. The PCAF complex is capable of efficiently acetylating histones in a nucleosomal context. The PCAF complex could be considered as the human version of the yeast SAGA complex. With TAF6L, acts as an epigenetic regulator essential for somatic reprogramming. Regulates target genes through H3K9ac deposition and MYC recruitment which trigger MYC regulatory network to orchestrate gene expression programs to control embryonic stem cell state. In Mus musculus (Mouse), this protein is TAF5-like RNA polymerase II p300/CBP-associated factor-associated factor 65 kDa subunit 5L.